The chain runs to 401 residues: Elongation factor Tu 1 (401 aa).

Residues K10–V209 enclose the tr-type G domain. The G1 stretch occupies residues G19 to T26. GTP is bound at residue G19–T26. T26 contributes to the Mg(2+) binding site. The G2 stretch occupies residues G60–A64. Residues D81–G84 form a G3 region. GTP contacts are provided by residues D81–H85 and N136–D139. The tract at residues N136–D139 is G4. Residues S174–L176 form a G5 region.

Belongs to the TRAFAC class translation factor GTPase superfamily. Classic translation factor GTPase family. EF-Tu/EF-1A subfamily. Monomer.

The protein resides in the cytoplasm. It catalyses the reaction GTP + H2O = GDP + phosphate + H(+). Functionally, GTP hydrolase that promotes the GTP-dependent binding of aminoacyl-tRNA to the A-site of ribosomes during protein biosynthesis. This chain is Elongation factor Tu 1, found in Roseiflexus castenholzii (strain DSM 13941 / HLO8).